A 316-amino-acid chain; its full sequence is Heme oxygenase 2 (316 aa).

The span at 1–12 shows a compositional bias: acidic residues; that stretch reads MSAEVETSEGVD. The interval 1–29 is disordered; the sequence is MSAEVETSEGVDESEKKNSGALEKENQMR. Serine 2 is subject to N-acetylserine. Position 2 is a phosphoserine (serine 2). Positions 13–27 are enriched in basic and acidic residues; the sequence is ESEKKNSGALEKENQ. Position 45 (histidine 45) interacts with heme b. HRM repeat units lie at residues 264-269 and 281-286; these read KCPFYA and SCPFRT. 2 positions are modified to S-nitrosocysteine: cysteine 265 and cysteine 282.

This sequence belongs to the heme oxygenase family. Post-translationally, S-nitrosylated by BLVRB.

Its subcellular location is the microsome. It localises to the endoplasmic reticulum. The catalysed reaction is heme b + 3 reduced [NADPH--hemoprotein reductase] + 3 O2 = biliverdin IXalpha + CO + Fe(2+) + 3 oxidized [NADPH--hemoprotein reductase] + 3 H2O + H(+). Its function is as follows. Heme oxygenase cleaves the heme ring at the alpha methene bridge to form biliverdin. Biliverdin is subsequently converted to bilirubin by biliverdin reductase. Under physiological conditions, the activity of heme oxygenase is highest in the spleen, where senescent erythrocytes are sequestrated and destroyed. Heme oxygenase 2 could be implicated in the production of carbon monoxide in brain where it could act as a neurotransmitter. This chain is Heme oxygenase 2 (HMOX2), found in Macaca fascicularis (Crab-eating macaque).